Here is a 639-residue protein sequence, read N- to C-terminus: tRNA-dihydrouridine(47) synthase [NAD(P)(+)]-like (639 aa).

Polar residues-rich tracts occupy residues 1–19 (MAES…TVTQ) and 54–65 (QTCSELSGNDAE). Disordered regions lie at residues 1–20 (MAES…VTQK) and 52–122 (DKQT…HSQF). The segment covering 66 to 85 (NTVRAEDAAEPEAKRIKLDD) has biased composition (basic and acidic residues). The span at 103–119 (EKKRARGQNKSRPHMKH) shows a compositional bias: basic residues. 2 consecutive C3H1-type zinc fingers follow at residues 122–152 (FEEN…HDVA) and 160–190 (EDIR…HLGD). FMN-binding positions include 300-302 (PLT) and Gln-354. Cys-385 serves as the catalytic Proton donor. FMN-binding positions include Lys-424, His-454, 486–488 (NGD), and 509–510 (AR).

It belongs to the Dus family. Dus3 subfamily. Requires FMN as cofactor.

It carries out the reaction 5,6-dihydrouridine(47) in tRNA + NAD(+) = uridine(47) in tRNA + NADH + H(+). It catalyses the reaction 5,6-dihydrouridine(47) in tRNA + NADP(+) = uridine(47) in tRNA + NADPH + H(+). The enzyme catalyses a 5,6-dihydrouridine in mRNA + NAD(+) = a uridine in mRNA + NADH + H(+). The catalysed reaction is a 5,6-dihydrouridine in mRNA + NADP(+) = a uridine in mRNA + NADPH + H(+). Its function is as follows. Catalyzes the synthesis of dihydrouridine, a modified base, in various RNAs, such as tRNAs, mRNAs and some long non-coding RNAs (lncRNAs). Mainly modifies the uridine in position 47 (U47) in the D-loop of most cytoplasmic tRNAs. Also able to mediate the formation of dihydrouridine in some mRNAs, thereby regulating their translation. This Xenopus tropicalis (Western clawed frog) protein is tRNA-dihydrouridine(47) synthase [NAD(P)(+)]-like (dus3l).